The sequence spans 655 residues: FYVE, RhoGEF and PH domain-containing protein 2 (655 aa).

A phosphoserine mark is found at serine 11 and serine 48. The segment at 18–64 is disordered; that stretch reads VFENSRTPEAAPRGQRLEDVHHRPECRPPESPGPREKTNVGEAVGSE. A compositionally biased stretch (basic and acidic residues) spans 32-56; sequence QRLEDVHHRPECRPPESPGPREKTN. In terms of domain architecture, DH spans 102-290; the sequence is PEKKIVQELL…FSAAQHSNAA (189 aa). One can recognise a PH 1 domain in the interval 319–418; it reads TLLREGPVLK…WMQAFQAAID (100 aa). An FYVE-type zinc finger spans residues 458–518; the sequence is DKMVTMCMRC…VCLHCYAFLT (61 aa). 8 residues coordinate Zn(2+): cysteine 464, cysteine 467, cysteine 481, cysteine 484, cysteine 489, cysteine 492, cysteine 510, and cysteine 513. Residues 544–641 enclose the PH 2 domain; the sequence is QSLMCSFLQL…WVKAMERAAS (98 aa). At serine 654 the chain carries Phosphoserine.

Its subcellular location is the cytoplasm. The protein localises to the cytoskeleton. The protein resides in the nucleus. It localises to the early endosome. It is found in the early endosome membrane. Its subcellular location is the cell projection. The protein localises to the ruffle membrane. In terms of biological role, activates CDC42, a member of the Ras-like family of Rho- and Rac proteins, by exchanging bound GDP for free GTP. Activates JNK1 via CDC42 but not RAC1. Binds to phosphatidylinositol 4,5-bisphosphate, phosphatidylinositol 3,4,5-trisphosphate, phosphatidylinositol 5-monophosphate, phosphatidylinositol 4-monophosphate and phosphatidylinositol 3-monophosphate. The sequence is that of FYVE, RhoGEF and PH domain-containing protein 2 (FGD2) from Homo sapiens (Human).